Here is a 444-residue protein sequence, read N- to C-terminus: Histidinol dehydrogenase (444 aa).

NAD(+) is bound by residues Tyr-135, Gln-199, and Asn-227. Positions 250, 272, and 275 each coordinate substrate. Zn(2+) is bound by residues Gln-272 and His-275. Residues Glu-341 and His-342 each act as proton acceptor in the active site. Positions 342, 375, 429, and 434 each coordinate substrate. Asp-375 is a Zn(2+) binding site. His-434 contributes to the Zn(2+) binding site.

Belongs to the histidinol dehydrogenase family. Zn(2+) is required as a cofactor.

It carries out the reaction L-histidinol + 2 NAD(+) + H2O = L-histidine + 2 NADH + 3 H(+). It functions in the pathway amino-acid biosynthesis; L-histidine biosynthesis; L-histidine from 5-phospho-alpha-D-ribose 1-diphosphate: step 9/9. In terms of biological role, catalyzes the sequential NAD-dependent oxidations of L-histidinol to L-histidinaldehyde and then to L-histidine. This chain is Histidinol dehydrogenase (hisD), found in Mycobacterium bovis (strain ATCC BAA-935 / AF2122/97).